Here is an 863-residue protein sequence, read N- to C-terminus: Protein ARG5,6, mitochondrial (863 aa).

The N-terminal 65 residues, 1-65 (MPSASLLVST…RYVSSTNGFS (65 aa)), are a transit peptide targeting the mitochondrion. Positions 353 to 505 (KLVKRSSIGE…NFVKSCDTAS (153 aa)) constitute an N-acetyltransferase domain. Residue Ser-359 is modified to Phosphoserine. The active site involves Cys-675.

It in the N-terminal section; belongs to the acetylglutamate kinase family. This sequence in the C-terminal section; belongs to the NAGSA dehydrogenase family. The protein precursor is cleaved into the two biologically active enzymes, the kinase and the reductase.

The protein resides in the mitochondrion. The catalysed reaction is N-acetyl-L-glutamate 5-semialdehyde + phosphate + NADP(+) = N-acetyl-L-glutamyl 5-phosphate + NADPH + H(+). It catalyses the reaction N-acetyl-L-glutamate + ATP = N-acetyl-L-glutamyl 5-phosphate + ADP. It participates in amino-acid biosynthesis; L-arginine biosynthesis; N(2)-acetyl-L-ornithine from L-glutamate: step 2/4. The protein operates within amino-acid biosynthesis; L-arginine biosynthesis; N(2)-acetyl-L-ornithine from L-glutamate: step 3/4. The kinase activity is inhibited by arginine. In Saccharomyces cerevisiae (strain ATCC 204508 / S288c) (Baker's yeast), this protein is Protein ARG5,6, mitochondrial (ARG5,6).